Here is a 430-residue protein sequence, read N- to C-terminus: tRNA(Ile)-lysidine synthase (430 aa).

Residue 21 to 26 participates in ATP binding; sequence SGGLDS.

The protein belongs to the tRNA(Ile)-lysidine synthase family.

It localises to the cytoplasm. The catalysed reaction is cytidine(34) in tRNA(Ile2) + L-lysine + ATP = lysidine(34) in tRNA(Ile2) + AMP + diphosphate + H(+). Its function is as follows. Ligates lysine onto the cytidine present at position 34 of the AUA codon-specific tRNA(Ile) that contains the anticodon CAU, in an ATP-dependent manner. Cytidine is converted to lysidine, thus changing the amino acid specificity of the tRNA from methionine to isoleucine. The protein is tRNA(Ile)-lysidine synthase of Salmonella dublin (strain CT_02021853).